A 112-amino-acid polypeptide reads, in one-letter code: Large ribosomal subunit protein uL1 (112 aa).

It belongs to the universal ribosomal protein uL1 family.

The sequence is that of Large ribosomal subunit protein uL1 (rpl-10a) from Caenorhabditis remanei (Caenorhabditis vulgaris).